The following is a 231-amino-acid chain: Probable glutathione S-transferase (231 aa).

The GST N-terminal domain occupies P4–A96. Glutathione contacts are provided by residues S14, Q43, V57, Q80–S81, Q124, and N128–K130. A GST C-terminal domain is found at N105–E227.

This sequence belongs to the GST superfamily. Zeta family. Homodimer.

It carries out the reaction RX + glutathione = an S-substituted glutathione + a halide anion + H(+). In terms of biological role, probable glutathione S-transferase. The protein is Probable glutathione S-transferase of Coccidioides immitis (strain RS) (Valley fever fungus).